Consider the following 2013-residue polypeptide: Centrosomal protein 224 (2013 aa).

5 HEAT repeats span residues 115-153, 158-196, 200-238, 348-386, and 427-465; these read TIEADSAEPVVEALLKGTSSTSPKILLASLAALTQALKT, QIPVKLILKQFSPWFENRDKGIRDQASELFIEIYRWIGK, PLISEALTPIQLKALQDQFEKLPTDPAVPLKYTRSEAAK, TSYVKPFITPILEKFKEKKTSVLQSVHTTMDSLVGKSIS, and TKVTKQLTKIFMEALNDTDSNIRDNASKAFAALGGIIGE. Residues 512 to 557 form a disordered region; the sequence is PVSSSNKKPAAATGNSKSSSTTTPTGRSSNSSPLPPPPSSSDDIKN. The span at 524 to 543 shows a compositional bias: low complexity; the sequence is TGNSKSSSTTTPTGRSSNSS. 5 HEAT repeats span residues 724–762, 816–854, 857–895, 899–937, and 977–1015; these read IQQLKPLLDYTKQCLESTNPDVKKSAIKLLCTIKINIGA, VDISVKLTPAIITNLSDANWKTRSDALDEIERIIIDANR, QPKLGGLIPALKNRLTDNNQKCTITTLNIIGMLSQAMGG, EKHARLLIPGILLLLGDSKKPVRDAVISCMNVIVQSDLG, and PSEINTLAKGIISCLQDKSAEIRSLADNLLSILCTQIPL. The segment at 1043-1109 is disordered; that stretch reads KTGQPIPPPS…QQQQRRSILQ (67 aa). A compositionally biased stretch (low complexity) spans 1053-1106; it reads KTKQSTSSSSSSSSTTSQQSSTPSSPQPIRQQQQQQQQQPTQPQQQQQQQQRRS. HEAT repeat units lie at residues 1240–1279, 1281–1314, and 1317–1353; these read EYEASCLVPILLEKSGSATNEQIKQIFKQSIQQLEELCLP, VLFRFAIEMVTSQNWRTRVEVLNVMASIIDKNGA, and CGNLKVVIPLITQNLNDSQSKQSSLLCLNKLYSHIKD. Composition is skewed to low complexity over residues 1372 to 1406, 1695 to 1735, and 1746 to 1796; these read NNNNNNNNNNNNNNNNNNNNVQQQQQQQQQQQQQQ, NRIS…INSS, and SNNT…TLST. 4 disordered regions span residues 1372–1413, 1695–1809, 1905–1949, and 1966–1995; these read NNNN…SLST, NRIS…YSGK, NQPS…IAPQ, and TLNPDQNSGSNNNNSHQNSPSTSSSNDLNS. A compositionally biased stretch (basic and acidic residues) spans 1799–1809; that stretch reads INKEPRDYSGK. Over residues 1913 to 1939 the composition is skewed to low complexity; it reads NNNNNNNNNNNNNNNNNINNNNNNNNN. The span at 1940–1949 shows a compositional bias: polar residues; the sequence is SGGNENIAPQ. The segment covering 1967 to 1995 has biased composition (low complexity); the sequence is LNPDQNSGSNNNNSHQNSPSTSSSNDLNS.

It belongs to the TOG/XMAP215 family. In terms of assembly, interacts with eb1 at the microtubule tip, centrosome and kinetochore. Interacts with lis1 in the cortical attachment of microtubules.

It is found in the cytoplasm. It localises to the cytoskeleton. Its subcellular location is the microtubule organizing center. The protein resides in the centrosome. The protein localises to the chromosome. It is found in the centromere. It localises to the kinetochore. Its function is as follows. Involved in regulation of microtubule dynamics. Regulates the interaction of microtubules tips with the centrosome and cell cortex. The protein is Centrosomal protein 224 (mtaA) of Dictyostelium discoideum (Social amoeba).